A 260-amino-acid chain; its full sequence is 3beta-hydroxysteroid dehydrogenase 2 (260 aa).

NAD(+)-binding positions include aspartate 43, 69 to 70 (DV), asparagine 96, tyrosine 163, and lysine 167. Catalysis depends on tyrosine 163, which acts as the Proton acceptor.

The protein belongs to the short-chain dehydrogenases/reductases (SDR) family.

The catalysed reaction is 3-oxo-5beta-cholan-24-oate + NADH + H(+) = isolithocholate + NAD(+). It carries out the reaction 12alpha-hydroxy-3-oxo-5beta-cholan-24-oate + NADH + H(+) = isodeoxycholate + NAD(+). The enzyme catalyses 12alpha-hydroxy-3-oxo-5beta-cholan-24-oate + NADPH + H(+) = isodeoxycholate + NADP(+). It catalyses the reaction 7alpha,12alpha-dihydroxy-3-oxo-5beta-cholan-24-oate + NADH + H(+) = isocholate + NAD(+). The catalysed reaction is 3-oxochenodeoxycholate + NADH + H(+) = isochenodeoxycholate + NAD(+). Functionally, involved in the modification of secondary bile acids into iso-bile acids (3beta-bile acids) via epimerization of the 3-OH group through a 3-oxo-intermediate. Catalyzes the reduction of 12-alpha-hydroxy-3-oxo-5-beta-cholan-24-oate (3-oxo-DCA) and 3-oxo-5-beta-cholan-24-oate (3-oxo-LCA) to yield isodeoxycholate (isoDCA) and isolithocholate (isoLCA), respectively. Is also able to catalyze the reduction of 3-dehydrocholate (3-oxo-CA or 7alpha,12alpha-dihydroxy-3-oxo-5beta-cholan-24-oate) and 7-alpha-hydroxy-3-oxo-5-beta-cholan-24-oate (3-oxo-CDCA), into isocholate (isoCA) and isochenodeoxycholate (isoCDCA), respectively. Accepts both NADH and NADPH as cosubstrates. The conversion of the abundant bile acid deoxycholate (DCA) into isoDCA by the gut bacterium E.lenta favors the growth of the keystone commensal genus Bacteroides, since isoDCA is less cytotoxic than its parent compound, DCA; iso-bile acids have thus a potential role in modulating gut community composition. The protein is 3beta-hydroxysteroid dehydrogenase 2 of Eggerthella lenta (strain ATCC 25559 / DSM 2243 / CCUG 17323 / JCM 9979 / KCTC 3265 / NCTC 11813 / VPI 0255 / 1899 B) (Eubacterium lentum).